A 43-amino-acid polypeptide reads, in one-letter code: Lanthionine-containing peptide SapB (43 aa).

An N-terminal signal peptide occupies residues 1–21; sequence MALLDLQAMDTPAEDSFGELA. Cross-links (lanthionine (Ser-Cys)) lie at residues 24–31 and 34–41; these read SQVSLLVC and SSLSVVLC. Residues Ser27 and Ser37 each carry the 2,3-didehydroalanine (Ser) modification.

The protein belongs to the lanthionine-containing morphogen protein family. In terms of processing, maturation involves the enzymatic conversion of Ser into dehydrated AA and the formation of thioether bonds with cysteine. This is followed by membrane translocation and cleavage of the modified precursor.

In terms of biological role, lanthionine-containing peptide devoid of antibiotic properties, involved in the formation of aerial mycelium. Suggested to self-assemble at air-water interfaces, thus providing a film of surfactant through which nascent aerial hyphae can emerge. The aerial hyphae differentiate further into spores. The sequence is that of Lanthionine-containing peptide SapB (ramS) from Streptomyces griseus subsp. griseus (strain JCM 4626 / CBS 651.72 / NBRC 13350 / KCC S-0626 / ISP 5235).